Consider the following 431-residue polypeptide: Large envelope protein (431 aa).

Gly2 is lipidated: N-myristoyl glycine; by host. A pre-S1 region spans residues 2–148 (GNNIKVTFNP…PPLRDTHPHL (147 aa)). The tract at residues 2–207 (GNNIKVTFNP…PSTTGDPALS (206 aa)) is pre-S. Residues 2–214 (GNNIKVTFNP…ALSPEMSPSS (213 aa)) lie on the Virion surface; in external conformation side of the membrane. The Intravirion; in internal conformation segment spans residues 2–286 (GNNIKVTFNP…NGFRWMYLRR (285 aa)). N-linked (GlcNAc...) asparagine glycosylation is present at Asn3. The tract at residues 115-147 (IPRGLVPPQTPTNRDQGRKPTPPTPPLRDTHPH) is disordered. The pre-S2 stretch occupies residues 149–207 (TMKNQTFHLQGFVDGLRDLTTTERQHNAYRDPFTTLSPAVPTVSTILSPPSTTGDPALS). A helical transmembrane segment spans residues 215-235 (LLGLLAGLQVVYFLWTKILTI). Residues 236 to 286 (AQNLDWWCTSLSFPGGIPECTGQNSQFQTCKHLPTSCPPTCNGFRWMYLRR) are Intravirion; in external conformation-facing. The helical transmembrane segment at 287–307 (FIIYLLVLLLCLIFLLVLLDW) threads the bilayer. The Virion surface segment spans residues 308–379 (KGLIPVCPLQ…WALARLSWLN (72 aa)). Asn351 carries an N-linked (GlcNAc...) asparagine; by host glycan. The chain crosses the membrane as a helical span at residues 380–400 (LLVPLLQWLGGISLIAWFLLI). The Intravirion portion of the chain corresponds to 401–406 (WMIWFW). Residues 407–429 (GPALLSILPPFIPIFVLFFLIWV) traverse the membrane as a helical segment. At 430–431 (YI) the chain is on the virion surface side.

This sequence belongs to the orthohepadnavirus major surface antigen family. In terms of assembly, in its internal form (Li-HBsAg), interacts with the capsid protein and with the isoform S. Interacts with host chaperone CANX. As to quaternary structure, associates with host chaperone CANX through its pre-S2 N glycan; this association may be essential for isoform M proper secretion. Interacts with isoform L. Interacts with the antigens of satellite virus HDV (HDVAgs); this interaction is required for encapsidation of HDV genomic RNA. Isoform M is N-terminally acetylated by host at a ratio of 90%, and N-glycosylated by host at the pre-S2 region. Post-translationally, myristoylated.

It is found in the virion membrane. Functionally, the large envelope protein exists in two topological conformations, one which is termed 'external' or Le-HBsAg and the other 'internal' or Li-HBsAg. In its external conformation the protein attaches the virus to cell receptors and thereby initiating infection. This interaction determines the species specificity and liver tropism. This attachment induces virion internalization predominantly through caveolin-mediated endocytosis. The large envelope protein also assures fusion between virion membrane and endosomal membrane. In its internal conformation the protein plays a role in virion morphogenesis and mediates the contact with the nucleocapsid like a matrix protein. The middle envelope protein plays an important role in the budding of the virion. It is involved in the induction of budding in a nucleocapsid independent way. In this process the majority of envelope proteins bud to form subviral lipoprotein particles of 22 nm of diameter that do not contain a nucleocapsid. The polypeptide is Large envelope protein (Marmota monax (Woodchuck)).